The primary structure comprises 488 residues: Sucrose phosphorylase (488 aa).

Sucrose-binding positions include aspartate 50, histidine 88, 191 to 193 (RLD), glutamate 233, 290 to 291 (HD), 341 to 344 (DLYQ), and arginine 398. Residue aspartate 193 is the Nucleophile of the active site. The active-site Proton donor is glutamate 233.

It belongs to the glycosyl hydrolase 13 family. Sucrose phosphorylase subfamily.

The catalysed reaction is sucrose + phosphate = D-fructose + alpha-D-glucose 1-phosphate. This chain is Sucrose phosphorylase, found in Agrobacterium vitis (Rhizobium vitis).